An 872-amino-acid polypeptide reads, in one-letter code: Sine oculis-binding protein homolog (872 aa).

Residues 1–14 (MAEMEKEGRPPENK) are compositionally biased toward basic and acidic residues. A disordered region spans residues 1-26 (MAEMEKEGRPPENKRSRKPAHPVKRE). 2 FCS-type zinc fingers span residues 142-180 (DDVS…KCFA) and 216-256 (FKNN…KCLN). Disordered stretches follow at residues 308 to 354 (RRKA…KSMP), 411 to 484 (FIRG…PGAP), and 550 to 619 (KPPN…GRSE). Residues 319-344 (GQSQGPGPSASTTVSPSDTANCSVTK) are compositionally biased toward polar residues. The span at 417–433 (HHASNPNSPLSNPMLPG) shows a compositional bias: low complexity. Positions 460–484 (IHPPSTPTMPGNPPGLLPPPPPGAP) are enriched in pro residues. The SUMO interaction motif 1 (SIM); mediates the binding to polysumoylated substrates signature appears at 620–624 (VVDLT). Serine 629 carries the phosphoserine modification. Residues 651–655 (VIDLT) carry the SUMO interaction motif 2 (SIM); mediates the binding to polysumoylated substrates motif. Lysine 675 participates in a covalent cross-link: Glycyl lysine isopeptide (Lys-Gly) (interchain with G-Cter in SUMO2). Serine 697 is subject to Phosphoserine. Residues 728–770 (AAEGAKGAEPPPEQPPPPPPPPPAPPKKLLSPEEPAVSELESV) are disordered. Residues 736–753 (EPPPEQPPPPPPPPPAPP) show a composition bias toward pro residues.

Belongs to the SOBP family. As to quaternary structure, interacts (via SIM domains) with SUMO1 and SUMO2.

In terms of biological role, implicated in development of the cochlea. The polypeptide is Sine oculis-binding protein homolog (Bos taurus (Bovine)).